Here is a 432-residue protein sequence, read N- to C-terminus: Hexuronate transporter (432 aa).

A signal peptide spans 1-31 (MRKIKGLRWYMIALVTLGTVLGYLTRNTVAA). Topologically, residues 33–48 (APTLMEELNISTQQYS) are periplasmic. Residues 49-69 (YIIAAYSAAYTVMQPVAGYVL) form a helical membrane-spanning segment. The Cytoplasmic portion of the chain corresponds to 70 to 75 (DVLGTK). Residues 76–96 (IGYAMFAVLWAVFCGATALAG) form a helical membrane-spanning segment. The Periplasmic portion of the chain corresponds to 97–99 (SWG). The chain crosses the membrane as a helical span at residues 100 to 120 (GLAVARGAVGAAEAAMIPAGL). Over 121 to 138 (KASSEWFPAKERSIAVGY) the chain is Cytoplasmic. Residues 139–159 (FNVGSSIGAMIAPPLVVWAIV) form a helical membrane-spanning segment. The Periplasmic segment spans residues 160-164 (MHSWQ). Residues 165 to 185 (MAFIISGALSFIWAMAWLIFY) form a helical membrane-spanning segment. Residues 186 to 236 (KHPRDQKHLTDEERDYIINGQEAQHQVSTAKKMSVGQILRNRQFWGIALPR) lie on the Cytoplasmic side of the membrane. The chain crosses the membrane as a helical span at residues 237 to 257 (FLAEPAWGTFNAWIPLFMFKV). Residues 258–264 (YGFNLKE) are Periplasmic-facing. The chain crosses the membrane as a helical span at residues 265–285 (IAMFAWMPMLFADLGCILGGY). Residues 286–293 (LPPLFQRW) are Cytoplasmic-facing. Residues 294 to 314 (FGVNLIVSRKMVVTLGAVLMI) form a helical membrane-spanning segment. Residues 315–317 (GPG) lie on the Periplasmic side of the membrane. A helical membrane pass occupies residues 318–338 (MIGLFTNPYVAIMLLCIGGFA). Residues 339–369 (HQALSGALITLSSDVFGRNEVATANGLTGMS) lie on the Cytoplasmic side of the membrane. The chain crosses the membrane as a helical span at residues 370–390 (AWLASTLFALVVGALADTIGF). Residue Ser-391 is a topological domain, periplasmic. The helical transmembrane segment at 392 to 412 (PLFAVLAVFDLLGALVIWTVL) threads the bilayer. Topologically, residues 413–432 (QNKPAIEVAQETHNDPAPQH) are cytoplasmic.

This sequence belongs to the major facilitator superfamily. Phthalate permease family.

It is found in the cell inner membrane. It carries out the reaction aldehydo-D-glucuronate(in) + H(+)(in) = aldehydo-D-glucuronate(out) + H(+)(out). The catalysed reaction is aldehydo-D-galacturonate(out) + H(+)(out) = aldehydo-D-galacturonate(in) + H(+)(in). Its function is as follows. Transport of aldohexuronates such as D-glucuronate and D-galacturonate. The polypeptide is Hexuronate transporter (exuT) (Escherichia coli O157:H7).